We begin with the raw amino-acid sequence, 500 residues long: Histidine ammonia-lyase (500 aa).

Residues alanine 141 to glycine 143 constitute a cross-link (5-imidazolinone (Ala-Gly)). A 2,3-didehydroalanine (Ser) modification is found at serine 142.

Belongs to the PAL/histidase family. In terms of processing, contains an active site 4-methylidene-imidazol-5-one (MIO), which is formed autocatalytically by cyclization and dehydration of residues Ala-Ser-Gly.

The protein localises to the cytoplasm. It carries out the reaction L-histidine = trans-urocanate + NH4(+). The protein operates within amino-acid degradation; L-histidine degradation into L-glutamate; N-formimidoyl-L-glutamate from L-histidine: step 1/3. This Shouchella clausii (strain KSM-K16) (Alkalihalobacillus clausii) protein is Histidine ammonia-lyase.